Reading from the N-terminus, the 295-residue chain is Tyrosine recombinase XerC (295 aa).

The Core-binding (CB) domain occupies 1-85 (MHILLQKYYN…ALRQFLNYLV (85 aa)). The Tyr recombinase domain occupies 106-285 (YLPKNMDMEQ…DFQHLAQVYD (180 aa)). Residues Arg145, Lys169, His237, Arg240, and His263 contribute to the active site. Tyr272 acts as the O-(3'-phospho-DNA)-tyrosine intermediate in catalysis.

This sequence belongs to the 'phage' integrase family. XerC subfamily. In terms of assembly, forms a cyclic heterotetrameric complex composed of two molecules of XerC and two molecules of XerD.

It localises to the cytoplasm. Functionally, site-specific tyrosine recombinase, which acts by catalyzing the cutting and rejoining of the recombining DNA molecules. The XerC-XerD complex is essential to convert dimers of the bacterial chromosome into monomers to permit their segregation at cell division. It also contributes to the segregational stability of plasmids. The polypeptide is Tyrosine recombinase XerC (Histophilus somni (strain 2336) (Haemophilus somnus)).